Here is an 89-residue protein sequence, read N- to C-terminus: Small ribosomal subunit protein uS15 (89 aa).

Belongs to the universal ribosomal protein uS15 family. Part of the 30S ribosomal subunit. Forms a bridge to the 50S subunit in the 70S ribosome, contacting the 23S rRNA.

One of the primary rRNA binding proteins, it binds directly to 16S rRNA where it helps nucleate assembly of the platform of the 30S subunit by binding and bridging several RNA helices of the 16S rRNA. In terms of biological role, forms an intersubunit bridge (bridge B4) with the 23S rRNA of the 50S subunit in the ribosome. This Leifsonia xyli subsp. xyli (strain CTCB07) protein is Small ribosomal subunit protein uS15.